We begin with the raw amino-acid sequence, 338 residues long: 5-dehydro-2-deoxygluconokinase (338 aa).

The protein belongs to the carbohydrate kinase PfkB family.

It carries out the reaction 5-dehydro-2-deoxy-D-gluconate + ATP = 6-phospho-5-dehydro-2-deoxy-D-gluconate + ADP + H(+). It functions in the pathway polyol metabolism; myo-inositol degradation into acetyl-CoA; acetyl-CoA from myo-inositol: step 5/7. Its function is as follows. Catalyzes the phosphorylation of 5-dehydro-2-deoxy-D-gluconate (2-deoxy-5-keto-D-gluconate or DKG) to 6-phospho-5-dehydro-2-deoxy-D-gluconate (DKGP). This Clostridium perfringens (strain ATCC 13124 / DSM 756 / JCM 1290 / NCIMB 6125 / NCTC 8237 / Type A) protein is 5-dehydro-2-deoxygluconokinase.